A 149-amino-acid chain; its full sequence is Calmodulin-1 (149 aa).

Ala2 bears the N-acetylalanine mark. EF-hand domains lie at 8 to 43, 44 to 79, 81 to 116, and 117 to 149; these read EQIAEFKEAFSLFDKDGDGTITTKELGTVMRSLGQN, PTEAELQDMINEVDADGNGTIDFPEFLTMMARKMKD, DSEEEIREAFRVFDKDGNGFISAAELRHVMTNLGEK, and LTDEEVDEMIREADIDGDGQVNYEEFVTMMTSK. Asp21, Asp23, Asp25, Thr27, Glu32, Asp57, Asp59, Asn61, Thr63, Glu68, Asp94, Asp96, Asn98, and Glu105 together coordinate Ca(2+). At Lys116 the chain carries N6,N6,N6-trimethyllysine. Ca(2+) is bound by residues Asp130, Asp132, Asp134, Gln136, and Glu141.

This sequence belongs to the calmodulin family.

Calmodulin mediates the control of a large number of enzymes, ion channels and other proteins by Ca(2+). Among the enzymes to be stimulated by the calmodulin-Ca(2+) complex are a number of protein kinases and phosphatases. The polypeptide is Calmodulin-1 (Branchiostoma floridae (Florida lancelet)).